A 309-amino-acid polypeptide reads, in one-letter code: Golgi-associated RAB2 interactor protein 1A (309 aa).

A phosphoserine mark is found at Ser-231, Ser-263, and Ser-267.

It belongs to the GARIN family. Interacts (via N-terminus) with RAB2B (in GTP-bound form).

The protein localises to the golgi apparatus. In terms of biological role, RAB2B effector protein required for accurate acrosome formation and normal male fertility. This chain is Golgi-associated RAB2 interactor protein 1A, found in Homo sapiens (Human).